The chain runs to 158 residues: Transcriptional repressor NrdR (158 aa).

A zinc finger spans residues 3–34; the sequence is CPFCSFPESRVLDSRPADEGNSIRRRRECGEC. Positions 49–139 constitute an ATP-cone domain; that stretch reads LVVVKKDGRR…VYRQFGDIYS (91 aa).

Belongs to the NrdR family. Zn(2+) is required as a cofactor.

Functionally, negatively regulates transcription of bacterial ribonucleotide reductase nrd genes and operons by binding to NrdR-boxes. The sequence is that of Transcriptional repressor NrdR from Desulforamulus reducens (strain ATCC BAA-1160 / DSM 100696 / MI-1) (Desulfotomaculum reducens).